A 92-amino-acid chain; its full sequence is C-C motif chemokine 4 (92 aa).

An N-terminal signal peptide occupies residues 1-23; sequence MKLCVSAFSLLLLVAAFCDSVLS. Cystine bridges form between Cys-34–Cys-58 and Cys-35–Cys-74.

The protein belongs to the intercrine beta (chemokine CC) family. Homodimer.

It localises to the secreted. In terms of biological role, monokine with inflammatory and chemokinetic properties. In Rattus norvegicus (Rat), this protein is C-C motif chemokine 4 (Ccl4).